The chain runs to 162 residues: Terminase, small subunit (162 aa).

Residues 7–27 form a helix-turn-helix (HTH) region; the sequence is NRFWEARSSHGRNPKFESPEA. The tract at residues 132 to 162 is disordered; that stretch reads QVEDVTPDKGDRDKRRSRIKELFNRGTGRDS. Positions 137–162 are enriched in basic and acidic residues; sequence TPDKGDRDKRRSRIKELFNRGTGRDS. The tract at residues 140-162 is interaction with the terminase large subunit gp2; that stretch reads KGDRDKRRSRIKELFNRGTGRDS. A DNA-binding region spans residues 143–152; it reads RDKRRSRIKE.

Belongs to the P22likvirus small terminase family. As to quaternary structure, homononamer; forms a ring-like structure through which genomic DNA is translocated into the capsid. Interacts with the terminase small subunit; the active complex is composed of dimer of terminase large subunits and a nonamer ring of terminase small subunits.

Its function is as follows. The terminase small subunit binds to the packaging initiation site and regulates the ATPase activity of the terminase large subunit. The terminase lies at a unique vertex of the procapsid and is composed of two subunits, a small terminase subunit involved in viral DNA recognition (packaging 'pac' sequence), and a large terminase subunit possessing endonucleolytic and ATPase activities. Both terminase subunits heterooligomerize and are docked on the portal protein to form the packaging machine. The terminase large subunit exhibits endonuclease activity and cleaves the viral genome concatemer once the capsid is full (headful packaging). Once the capsid is packaged with the DNA, the terminase complex is substituted by neck proteins. This is Terminase, small subunit (3) from Salmonella typhimurium (Bacteriophage P22).